A 211-amino-acid chain; its full sequence is ATP-dependent Clp protease proteolytic subunit (211 aa).

Residue Ser106 is the Nucleophile of the active site. His131 is a catalytic residue.

This sequence belongs to the peptidase S14 family. In terms of assembly, fourteen ClpP subunits assemble into 2 heptameric rings which stack back to back to give a disk-like structure with a central cavity, resembling the structure of eukaryotic proteasomes.

It is found in the cytoplasm. It carries out the reaction Hydrolysis of proteins to small peptides in the presence of ATP and magnesium. alpha-casein is the usual test substrate. In the absence of ATP, only oligopeptides shorter than five residues are hydrolyzed (such as succinyl-Leu-Tyr-|-NHMec, and Leu-Tyr-Leu-|-Tyr-Trp, in which cleavage of the -Tyr-|-Leu- and -Tyr-|-Trp bonds also occurs).. In terms of biological role, cleaves peptides in various proteins in a process that requires ATP hydrolysis. Has a chymotrypsin-like activity. Plays a major role in the degradation of misfolded proteins. The chain is ATP-dependent Clp protease proteolytic subunit from Rhodopseudomonas palustris (strain BisA53).